Here is a 358-residue protein sequence, read N- to C-terminus: Phospho-N-acetylmuramoyl-pentapeptide-transferase (358 aa).

The next 10 membrane-spanning stretches (helical) occupy residues A28–L48, T70–A90, L92–F112, M133–Y153, V165–S185, G196–T216, V233–F253, V260–L280, L285–V305, and K335–L355.

It belongs to the glycosyltransferase 4 family. MraY subfamily. Mg(2+) is required as a cofactor.

The protein localises to the cell inner membrane. The catalysed reaction is UDP-N-acetyl-alpha-D-muramoyl-L-alanyl-gamma-D-glutamyl-meso-2,6-diaminopimeloyl-D-alanyl-D-alanine + di-trans,octa-cis-undecaprenyl phosphate = di-trans,octa-cis-undecaprenyl diphospho-N-acetyl-alpha-D-muramoyl-L-alanyl-D-glutamyl-meso-2,6-diaminopimeloyl-D-alanyl-D-alanine + UMP. The protein operates within cell wall biogenesis; peptidoglycan biosynthesis. Its function is as follows. Catalyzes the initial step of the lipid cycle reactions in the biosynthesis of the cell wall peptidoglycan: transfers peptidoglycan precursor phospho-MurNAc-pentapeptide from UDP-MurNAc-pentapeptide onto the lipid carrier undecaprenyl phosphate, yielding undecaprenyl-pyrophosphoryl-MurNAc-pentapeptide, known as lipid I. The chain is Phospho-N-acetylmuramoyl-pentapeptide-transferase from Desulfovibrio desulfuricans (strain ATCC 27774 / DSM 6949 / MB).